The following is a 345-amino-acid chain: MSHEKSFLVSGDSYPPQNIVGPQAPMPPYVQAPYPGAPYPQAPFQPSPYGQPGYPHGPSPYPQGGYPQGPYPQGGYPQGPYPQSPFPPNPYGQPPPFQDPGSPQHGNYQEEGPPSYYDNQDFPAVNWDKNIRQAFIRKVFLVLTLQLSVTLSTVAIFTFVGEVKGFVRENVWTYYVSYAIFFISLIVLSCCGDFRRKHPWNLVALSILTVSLSYMVGMIASFYNTEAVIMAVGITTAVCFTVVIFSMQTRYDFTSCMGVLLVSVVVLFIFAILCIFIRNRILEIVYASLGALLFTCFLAVDTQLLLGNKQLSLSPEEYVFAALNLYTDIINIFLYILTIIGRAKE.

Positions 1 to 115 are disordered; that stretch reads MSHEKSFLVS…GNYQEEGPPS (115 aa). Pro residues-rich tracts occupy residues 24-46 and 79-98; these read APMP…PFQP and GPYP…PPFQ. Transmembrane regions (helical) follow at residues 139–159, 171–191, 202–222, 227–247, 257–277, 281–301, and 320–340; these read VFLV…IFTF, VWTY…LSCC, LVAL…IASF, AVIM…IFSM, MGVL…CIFI, ILEI…LAVD, and FAAL…LTII.

The protein belongs to the BI1 family. LFG subfamily.

The protein localises to the membrane. In terms of biological role, potential apoptotic regulator. This Mus musculus (Mouse) protein is Protein lifeguard 1 (Grina).